Reading from the N-terminus, the 651-residue chain is Acetyl-coenzyme A synthetase (651 aa).

Residues 190–193 (RGGR), T309, and N333 contribute to the CoA site. ATP is bound by residues 385 to 387 (GEP), 409 to 414 (DTWWQT), D498, and R513. S521 contacts CoA. R524 is an ATP binding site. Residues V535, H537, and V540 each contribute to the Mg(2+) site. R582 is a CoA binding site. K607 carries the N6-acetyllysine modification.

It belongs to the ATP-dependent AMP-binding enzyme family. The cofactor is Mg(2+). Acetylated. Deacetylation by the SIR2-homolog deacetylase activates the enzyme.

The enzyme catalyses acetate + ATP + CoA = acetyl-CoA + AMP + diphosphate. Its function is as follows. Catalyzes the conversion of acetate into acetyl-CoA (AcCoA), an essential intermediate at the junction of anabolic and catabolic pathways. AcsA undergoes a two-step reaction. In the first half reaction, AcsA combines acetate with ATP to form acetyl-adenylate (AcAMP) intermediate. In the second half reaction, it can then transfer the acetyl group from AcAMP to the sulfhydryl group of CoA, forming the product AcCoA. The protein is Acetyl-coenzyme A synthetase of Xanthobacter autotrophicus (strain ATCC BAA-1158 / Py2).